The chain runs to 359 residues: G-protein coupled receptor 15 (359 aa).

Topologically, residues 1–33 are extracellular; it reads MDPEETSVYLDYYYATSPNPDIRETHSHVPYTS. The chain crosses the membrane as a helical span at residues 34–54; sequence VFLPVFYTAVFLTGVLGNLVL. Residues 55 to 69 lie on the Cytoplasmic side of the membrane; sequence MGALHFKPGSRRLID. The chain crosses the membrane as a helical span at residues 70-90; that stretch reads IFIINLAASDFIFLVTLPLWV. Topologically, residues 91 to 120 are extracellular; sequence DKEASLGLWRTGSFLCKGSSYMISVNMHCS. Residues 121–141 form a helical membrane-spanning segment; that stretch reads VFLLTCMSVDRYLAIVCPVVS. The Cytoplasmic segment spans residues 142–149; that stretch reads RKFRRTDC. The chain crosses the membrane as a helical span at residues 150–170; it reads AYVVCASIWFISCLLGLPTLL. The Extracellular segment spans residues 171–192; that stretch reads SRELTLIDDKPYCAEKKATPLK. The helical transmembrane segment at 193–213 threads the bilayer; the sequence is LIWSLVALIFTFFVPLLNIVT. Topologically, residues 214 to 239 are cytoplasmic; that stretch reads CYCCIARKLCAHYQQSGRHNKKLKKS. Residues 240–260 traverse the membrane as a helical segment; that stretch reads IKIILIVVAAFLVSWLPFNTF. At 261–283 the chain is on the extracellular side; that stretch reads KLLAIVSGLQERYFPSAMLQLGM. The chain crosses the membrane as a helical span at residues 284 to 304; it reads EVSGPLAFANSCVNPFIYYIF. Over 305 to 359 the chain is Cytoplasmic; the sequence is DSYIRRAIVHCLCPCLKNYDFGSSTETSDSHLTKALSTFIHAEDFTRRRKRSVSL. Serine 358 is modified (phosphoserine).

This sequence belongs to the G-protein coupled receptor 1 family. As to quaternary structure, interacts with adapter YWHAE; this interaction promotes ER-to-Golgi transport of GPR15. In terms of processing, phosphorylation is necessary for YWHAE binding and efficient surface expression. Post-translationally, O-glycosylated. Sialylated O-glycans in the N-terminal tail inhibits binding of GPR15LG. Sulfation is required for efficient binding of GPR15LG.

The protein resides in the cell membrane. In terms of biological role, g protein-coupled receptor that plays an important role in immune homeostasis. Acts via its natural ligand GPR15LG, a chemokine-like polypeptide strongly expressed in gastrointestinal tissues. GPR15-GPR15LG signaling axis regulates intestinal homeostasis and inflammation through the migration of immune cells. Controls thereby the specific homing of T-cells, particularly FOXP3+ regulatory T-cells (Tregs), to the large intestine lamina propria. Also required for skin localization of thymus-derived dendritic epidermal T-cells. Plays an important role in mediating cytoprotective function as well as angiogenesis of thrombomodulin. Mechanistically, preferentially signals through the Gi/o pathway to inhibit adenylate cyclase activity and activate a phosphatidylinositol-calcium second messenger system that regulates the release of Ca(2+) ions from intracellular stores. The polypeptide is G-protein coupled receptor 15 (GPR15) (Macaca fascicularis (Crab-eating macaque)).